The primary structure comprises 504 residues: Probable cytochrome P450 6a21 (504 aa).

C449 contacts heme.

The protein belongs to the cytochrome P450 family. Heme serves as cofactor.

Its subcellular location is the endoplasmic reticulum membrane. The protein localises to the microsome membrane. May be involved in the metabolism of insect hormones and in the breakdown of synthetic insecticides. The chain is Probable cytochrome P450 6a21 (Cyp6a21) from Drosophila melanogaster (Fruit fly).